Consider the following 255-residue polypeptide: uncharacterized protein (255 aa).

Disordered regions lie at residues 112-145 and 157-183; these read CWPG…PSPG and GLAE…PDAQ.

This is an uncharacterized protein from Rhodospirillum rubrum.